A 200-amino-acid chain; its full sequence is Pyrrolidone-carboxylate peptidase (200 aa).

Active-site residues include E78, C141, and H165.

Belongs to the peptidase C15 family. In terms of assembly, homotetramer.

Its subcellular location is the cytoplasm. The enzyme catalyses Release of an N-terminal pyroglutamyl group from a polypeptide, the second amino acid generally not being Pro.. Its function is as follows. Removes 5-oxoproline from various penultimate amino acid residues except L-proline. The sequence is that of Pyrrolidone-carboxylate peptidase from Lactobacillus acidophilus (strain ATCC 700396 / NCK56 / N2 / NCFM).